A 472-amino-acid polypeptide reads, in one-letter code: Adenosylhomocysteinase (472 aa).

Positions 64, 138, and 198 each coordinate substrate. Residue 199 to 201 coordinates NAD(+); sequence TTT. Substrate contacts are provided by K228 and D232. NAD(+)-binding positions include N233, 262 to 267, E285, N320, 341 to 343, and N386; these read GFGDVG and IGH.

It belongs to the adenosylhomocysteinase family. Requires NAD(+) as cofactor.

Its subcellular location is the cytoplasm. The catalysed reaction is S-adenosyl-L-homocysteine + H2O = L-homocysteine + adenosine. The protein operates within amino-acid biosynthesis; L-homocysteine biosynthesis; L-homocysteine from S-adenosyl-L-homocysteine: step 1/1. Its function is as follows. May play a key role in the regulation of the intracellular concentration of adenosylhomocysteine. This Prochlorococcus marinus subsp. pastoris (strain CCMP1986 / NIES-2087 / MED4) protein is Adenosylhomocysteinase.